The primary structure comprises 248 residues: Killer cell lectin-like receptor subfamily I member 2 (248 aa).

Residues 1–79 (MHKKKHIKHG…GIDPWLTTWQ (79 aa)) are Cytoplasmic-facing. Residues 19-44 (IGTKSPTFQEKQRPSKTDQRSTVWRE) are disordered. Residues 28–44 (EKQRPSKTDQRSTVWRE) show a composition bias toward basic and acidic residues. Residues 80-100 (MITVILATLCIILVTKVGFLI) traverse the membrane as a helical; Signal-anchor for type II membrane protein segment. Residues 101 to 248 (PSLFSKGEKQ…KKTYICEFNI (148 aa)) lie on the Extracellular side of the membrane. 3 cysteine pairs are disulfide-bonded: Cys132–Cys145, Cys161–Cys244, and Cys223–Cys236. One can recognise a C-type lectin domain in the interval 139–245 (FGNNFYCVFR…CSAKKTYICE (107 aa)). 3 N-linked (GlcNAc...) asparagine glycosylation sites follow: Asn197, Asn214, and Asn220.

As to quaternary structure, heterodimer with KLRE1. Expressed in natural killer (NK) cells.

It localises to the cell membrane. In terms of biological role, lectin-like receptor for natural killer (NK) cells. Heterodimer formation with KLRE1 mediates NK cell cytolytic activity. This is Killer cell lectin-like receptor subfamily I member 2 from Mus musculus (Mouse).